Reading from the N-terminus, the 248-residue chain is 14-3-3 protein sigma (248 aa).

Residues Ser-5, Ser-74, and Ser-248 each carry the phosphoserine modification.

This sequence belongs to the 14-3-3 family. As to quaternary structure, homodimer. Interacts with KRT17 and SAMSN1. Found in a complex with XPO7, EIF4A1, ARHGAP1, VPS26A, VPS29 and VPS35. Interacts with GAB2. Interacts with SRPK2. Interacts with COPS6. Interacts with COP1; this interaction leads to proteasomal degradation. Interacts with the 'Thr-369' phosphorylated form of DAPK2. Interacts with PI4KB. Interacts with SLITRK1. Interacts with LRRK2; this interaction is dependent on LRRK2 phosphorylation. Interacts with PKP3 (via N-terminus); the interaction maintains the cytoplasmic pool of PKP3, facilitates PKP3 exchange at desmosomes and restricts PKP3 localization to existing desmosome cell junctions. Interacts with LCP2. Ubiquitinated. Ubiquitination by RFFL induces proteasomal degradation and indirectly regulates p53/TP53 activation. Present mainly in tissues enriched in stratified squamous keratinizing epithelium.

It localises to the cytoplasm. Its subcellular location is the nucleus. The protein localises to the secreted. Functionally, adapter protein implicated in the regulation of a large spectrum of both general and specialized signaling pathways. Binds to a large number of partners, usually by recognition of a phosphoserine or phosphothreonine motif. Binding generally results in the modulation of the activity of the binding partner. Promotes cytosolic retention of GBP1 GTPase by binding to phosphorylated GBP1, thereby inhibiting the innate immune response. Also acts as a TP53/p53-regulated inhibitor of G2/M progression. When bound to KRT17, regulates protein synthesis and epithelial cell growth by stimulating Akt/mTOR pathway. Acts to maintain desmosome cell junction adhesion in epithelial cells via interacting with and sequestering PKP3 to the cytoplasm, thereby restricting its translocation to existing desmosome structures and therefore maintaining desmosome protein homeostasis. Also acts to facilitate PKP3 exchange at desmosome plaques, thereby maintaining keratinocyte intercellular adhesion. May also regulate MDM2 autoubiquitination and degradation and thereby activate p53/TP53. This Homo sapiens (Human) protein is 14-3-3 protein sigma (SFN).